Reading from the N-terminus, the 114-residue chain is Large ribosomal subunit protein uL22 (114 aa).

This sequence belongs to the universal ribosomal protein uL22 family. In terms of assembly, part of the 50S ribosomal subunit.

In terms of biological role, this protein binds specifically to 23S rRNA; its binding is stimulated by other ribosomal proteins, e.g. L4, L17, and L20. It is important during the early stages of 50S assembly. It makes multiple contacts with different domains of the 23S rRNA in the assembled 50S subunit and ribosome. The globular domain of the protein is located near the polypeptide exit tunnel on the outside of the subunit, while an extended beta-hairpin is found that lines the wall of the exit tunnel in the center of the 70S ribosome. This chain is Large ribosomal subunit protein uL22, found in Streptococcus agalactiae serotype Ia (strain ATCC 27591 / A909 / CDC SS700).